The primary structure comprises 383 residues: Transcription factor Y1 (383 aa).

2 consecutive HTH myb-type domains span residues 9-61 and 62-116; these read KVGL…INYL and RADV…SRQI. DNA-binding regions (H-T-H motif) lie at residues 37–61 and 89–112; these read WRSL…INYL and WSLI…NSHL. Residues 136–250 are disordered; the sequence is SKLHSAEKRR…DATGPWELDP (115 aa). 2 stretches are compositionally biased toward low complexity: residues 155-170 and 191-207; these read KSSS…SSKT and ASSP…ASSP.

The protein localises to the nucleus. It participates in pigment biosynthesis. Its function is as follows. Transcription factor involved in regulating the biosynthetic pathway of flavan-4-ol-derived red phlobaphene and red-brown 3-deoxyanthocyanidin (3-DA) pigments. Regulates transcription of chalcone synthase, chalcone isomerase, dihydroflavonol reductase and flavonoid 3'-hydroxylase genes required for the phlobaphene and 3-DA biosynthesis. Transcription of these genes is activated in mesocotyls in response to ingress of non-pathogenic fungus C.heterostrophus. Regulates the production of 3-DA phytoalexins (luteolinidin, 5-methoxyluteolinidin, apigeninidin and 7-methoxyapigeninidin) in mesocotyls in response to C.heterostrophus and corn leaf aphid (CLA) R.maidis. Involved in resistance against anthracnose leaf blight (ALB) caused by the pathogenic C.sublineolum fungus by inducing the production of 3-DA phytoalexins. Confers resistance, also by inducing the production of 3-DA phytoalexins, against CLA R.maidis, which is an insect and a pest. The protein is Transcription factor Y1 of Sorghum bicolor (Sorghum).